The sequence spans 173 residues: Crossover junction endodeoxyribonuclease RuvC (173 aa).

Residues D8, E67, and D139 contribute to the active site. Mg(2+)-binding residues include D8, E67, and D139.

Belongs to the RuvC family. Homodimer which binds Holliday junction (HJ) DNA. The HJ becomes 2-fold symmetrical on binding to RuvC with unstacked arms; it has a different conformation from HJ DNA in complex with RuvA. In the full resolvosome a probable DNA-RuvA(4)-RuvB(12)-RuvC(2) complex forms which resolves the HJ. Mg(2+) is required as a cofactor.

The protein localises to the cytoplasm. The catalysed reaction is Endonucleolytic cleavage at a junction such as a reciprocal single-stranded crossover between two homologous DNA duplexes (Holliday junction).. Functionally, the RuvA-RuvB-RuvC complex processes Holliday junction (HJ) DNA during genetic recombination and DNA repair. Endonuclease that resolves HJ intermediates. Cleaves cruciform DNA by making single-stranded nicks across the HJ at symmetrical positions within the homologous arms, yielding a 5'-phosphate and a 3'-hydroxyl group; requires a central core of homology in the junction. The consensus cleavage sequence is 5'-(A/T)TT(C/G)-3'. Cleavage occurs on the 3'-side of the TT dinucleotide at the point of strand exchange. HJ branch migration catalyzed by RuvA-RuvB allows RuvC to scan DNA until it finds its consensus sequence, where it cleaves and resolves the cruciform DNA. Plays a role in recovery after DNA ADP-ribosylation, probably via replication fork reversal. This Escherichia coli O127:H6 (strain E2348/69 / EPEC) protein is Crossover junction endodeoxyribonuclease RuvC.